Here is a 158-residue protein sequence, read N- to C-terminus: C-type lection lectoxin-Enh3 (158 aa).

A signal peptide spans 1 to 23; it reads MGQFTVVSLGLLAMFLSLSGAKG. 3 disulfides stabilise this stretch: cysteine 26–cysteine 37, cysteine 54–cysteine 154, and cysteine 129–cysteine 146. The 123-residue stretch at 33–155 folds into the C-type lectin domain; it reads RNGVCNKLFP…CASLHPFICQ (123 aa). A Mannose-binding motif is present at residues 119-121; that stretch reads EPN. Residues glutamate 127, asparagine 142, and aspartate 143 each coordinate Ca(2+).

It belongs to the true venom lectin family. As to expression, expressed by the venom gland.

Its subcellular location is the secreted. In terms of biological role, mannose-binding lectin which recognizes specific carbohydrate structures and agglutinates a variety of animal cells by binding to cell-surface glycoproteins and glycolipids. May be a calcium-dependent lectin. This Pseudoferania polylepis (Macleay's water snake) protein is C-type lection lectoxin-Enh3.